Here is a 261-residue protein sequence, read N- to C-terminus: Sepiapterin reductase (261 aa).

NADP(+)-binding positions include 16-22 (GASRGFG), 44-45 (RT), and 71-72 (DL). Residues 158–159 (SL) and tyrosine 171 contribute to the substrate site. Residue lysine 175 coordinates NADP(+). Glycine 200 is a binding site for substrate. 202 to 207 (LDTDMH) lines the NADP(+) pocket. Residue aspartate 258 coordinates substrate.

The protein belongs to the sepiapterin reductase family. In terms of assembly, homodimer.

The protein localises to the cytoplasm. The enzyme catalyses L-erythro-7,8-dihydrobiopterin + NADP(+) = L-sepiapterin + NADPH + H(+). It carries out the reaction (6R)-L-erythro-5,6,7,8-tetrahydrobiopterin + 2 NADP(+) = 6-pyruvoyl-5,6,7,8-tetrahydropterin + 2 NADPH + 2 H(+). Functionally, catalyzes the final one or two reductions in tetra-hydrobiopterin biosynthesis to form 5,6,7,8-tetrahydrobiopterin. This is Sepiapterin reductase (spr) from Xenopus tropicalis (Western clawed frog).